A 123-amino-acid chain; its full sequence is Small ribosomal subunit protein uS13 (123 aa).

Residues Gly95–Lys123 form a disordered region.

The protein belongs to the universal ribosomal protein uS13 family. Part of the 30S ribosomal subunit. Forms a loose heterodimer with protein S19. Forms two bridges to the 50S subunit in the 70S ribosome.

Its function is as follows. Located at the top of the head of the 30S subunit, it contacts several helices of the 16S rRNA. In the 70S ribosome it contacts the 23S rRNA (bridge B1a) and protein L5 of the 50S subunit (bridge B1b), connecting the 2 subunits; these bridges are implicated in subunit movement. Contacts the tRNAs in the A and P-sites. The polypeptide is Small ribosomal subunit protein uS13 (Desulfitobacterium hafniense (strain DSM 10664 / DCB-2)).